The following is a 197-amino-acid chain: Phospholipid hydroperoxide glutathione peroxidase GPX4 (197 aa).

Serine 40 carries the post-translational modification Phosphoserine. Selenocysteine 73 is an active-site residue. Selenocysteine 73 is a non-standard amino acid (selenocysteine).

Belongs to the glutathione peroxidase family. As to quaternary structure, monomer. Has a tendency to form higher mass oligomers. Interacts with FUNDC1; this interaction promotes GPX4 recruitment into mitochondria through TOM/TIM complex where it is degraded by mitophagy. In terms of tissue distribution, widely expressed with the highest levels in testis, heart, cerebrum, ileum, stomach, liver, jejunum and epididymis. Expressed primarily in testis and sperm midpiece (at protein level). Expressed in brain (at protein level). Expressed in heart, liver and kidney (at protein level). Expressed in retina, especially in inner segments of photoreceptor cells (at protein level). As to expression, highly expressed during embryogenesis. Down-regulated between 14.5 dpc and 17.5 dpc. Highly expressed during embryogenesis. In contrast to isoform Mitochondrial and isoform Nuclear, which are down-regulated between 14.5 dpc and 17.5 dpc, remains constant. In terms of tissue distribution, mainly expressed in sperm. Weakly expressed during embryogenesis. Down-regulated between 14.5 dpc and 17.5 dpc.

It localises to the mitochondrion. The protein resides in the cytoplasm. The protein localises to the nucleus. It carries out the reaction a hydroperoxy polyunsaturated fatty acid + 2 glutathione = a hydroxy polyunsaturated fatty acid + glutathione disulfide + H2O. The catalysed reaction is 2 glutathione + H2O2 = glutathione disulfide + 2 H2O. It catalyses the reaction tert-butyl hydroperoxide + 2 glutathione = tert-butanol + glutathione disulfide + H2O. The enzyme catalyses cumene hydroperoxide + 2 glutathione = 2-phenylpropan-2-ol + glutathione disulfide + H2O. It carries out the reaction (9S)-hydroperoxy-(10E,12Z)-octadecadienoate + 2 glutathione = (9S)-hydroxy-(10E,12Z)-octadecadienoate + glutathione disulfide + H2O. The catalysed reaction is (13S)-hydroperoxy-(9Z,11E)-octadecadienoate + 2 glutathione = (13S)-hydroxy-(9Z,11E)-octadecadienoate + glutathione disulfide + H2O. It catalyses the reaction (5S)-hydroperoxy-(6E,8Z,11Z,14Z)-eicosatetraenoate + 2 glutathione = (5S)-hydroxy-(6E,8Z,11Z,14Z)-eicosatetraenoate + glutathione disulfide + H2O. The enzyme catalyses (12R)-hydroperoxy-(5Z,8Z,10E,14Z)-eicosatetraenoate + 2 glutathione = (12R)-hydroxy-(5Z,8Z,10E,14Z)-eicosatetraenoate + glutathione disulfide + H2O. It carries out the reaction (12S)-hydroperoxy-(5Z,8Z,10E,14Z)-eicosatetraenoate + 2 glutathione = (12S)-hydroxy-(5Z,8Z,10E,14Z)-eicosatetraenoate + glutathione disulfide + H2O. The catalysed reaction is (15S)-hydroperoxy-(5Z,8Z,11Z,13E)-eicosatetraenoate + 2 glutathione = (15S)-hydroxy-(5Z,8Z,11Z,13E)-eicosatetraenoate + glutathione disulfide + H2O. It catalyses the reaction (5S)-hydroperoxy-(6E,8Z,11Z,14Z,17Z)-eicosapentaenoate + 2 glutathione = (5S)-hydroxy-(6E,8Z,11Z,14Z,17Z)-eicosapentaenoate + glutathione disulfide + H2O. The enzyme catalyses (12S)-hydroperoxy-(5Z,8Z,10E,14Z,17Z)-eicosapentaenoate + 2 glutathione = (12S)-hydroxy-(5Z,8Z,10E,14Z,17Z)-eicosapentaenoate + glutathione disulfide + H2O. It carries out the reaction (15S)-hydroperoxy-(5Z,8Z,11Z,13E,17Z)-eicosapentaenoate + 2 glutathione = (15S)-hydroxy-(5Z,8Z,11Z,13E,17Z)-eicosapentaenoate + glutathione disulfide + H2O. The catalysed reaction is (15S)-hydroperoxy-(11Z,13E)-eicosadienoate + 2 glutathione = (15S)-hydroxy-(11Z,13E)-eicosadienoate + glutathione disulfide + H2O. It catalyses the reaction (17S)-hydroperoxy-(4Z,7Z,10Z,13Z,15E,19Z)-docosahexaenoate + 2 glutathione = (17S)-hydroxy-(4Z,7Z,10Z,13Z,15E,19Z)-docosahexaenoate + glutathione disulfide + H2O. The enzyme catalyses a hydroperoxy-1,2-diacyl-glycero-3-phosphocholine + 2 glutathione = a hydroxy-1,2-diacyl-glycero-3-phosphocholine + glutathione disulfide + H2O. In terms of biological role, essential antioxidant peroxidase that directly reduces phospholipid hydroperoxide even if they are incorporated in membranes and lipoproteins. Can also reduce fatty acid hydroperoxide, cholesterol hydroperoxide and thymine hydroperoxide. Plays a key role in protecting cells from oxidative damage by preventing membrane lipid peroxidation. Required to prevent cells from ferroptosis, a non-apoptotic cell death resulting from an iron-dependent accumulation of lipid reactive oxygen species. The presence of selenocysteine (Sec) versus Cys at the active site is essential for life: it provides resistance to overoxidation and prevents cells against ferroptosis. The presence of Sec at the active site is also essential for the survival of a specific type of parvalbumin-positive interneurons, thereby preventing against fatal epileptic seizures. May be required to protect cells from the toxicity of ingested lipid hydroperoxides. Required for normal sperm development and male fertility. Essential for maturation and survival of photoreceptor cells. Plays a role in a primary T-cell response to viral and parasitic infection by protecting T-cells from ferroptosis and by supporting T-cell expansion. Plays a role of glutathione peroxidase in platelets in the arachidonic acid metabolism. Reduces hydroperoxy ester lipids formed by a 15-lipoxygenase that may play a role as down-regulator of the cellular 15-lipoxygenase pathway. Can also reduce small soluble hydroperoxides such as H2O2 and tert-butyl hydroperoxide. Its function is as follows. Specifically able to suppress the production of leukotriene and prostaglandin in response to several stimuli by reducing fatty acid hydroperoxide. Specifically required to prevent mitochondrial cell death by mediating reduction of cardiolipin hydroperoxide. Also required for normal sperm development and male fertility. Functionally, required for male fertility by stabilizing the condensed chromatin in sperm nuclei. The chain is Phospholipid hydroperoxide glutathione peroxidase GPX4 from Mus musculus (Mouse).